The following is a 407-amino-acid chain: MPHSQISPAEGSRRILEEYHIDEDVGFALPHPLEELPDTYRPWILVARNLPKLIENGKLREEVEKLPTLRTEELRGHRLQRLAHLALGYITMAYVWNRGDDDIRKVLPRNLAVPYCELSEKLGLPPILSYADCVLANWKKKDPNGPMTYENMDILFSFPGGDCDKGFFLVSLMVEIAASPAIKAIPTVSSAVEHQDPKALEKALCSIAASLEKAKEIFKRMRDFVDPDTFFHVLRIYLSGWKGNPKLPEGLLYEGVWDTPKKFSGGSAGQSSIFQSLDVLLGIKHDVGEGSAAEFLQEMREYMPPAHRNFLSSLESAPPVREFVILRRNEDLKEAYNECVNGLVSLRMFHLSIVDTYIVKPSKQKPMGGHKSEEPSNTENRGTGGTDVMNFLRSVKDTTKKALLSWP.

Residue His350 participates in heme b binding. The tract at residues 362 to 388 (SKQKPMGGHKSEEPSNTENRGTGGTDV) is disordered.

Belongs to the indoleamine 2,3-dioxygenase family. Monomer. Requires heme b as cofactor.

The protein resides in the cytoplasm. It localises to the cytosol. The enzyme catalyses D-tryptophan + O2 = N-formyl-D-kynurenine. It carries out the reaction L-tryptophan + O2 = N-formyl-L-kynurenine. With respect to regulation, activity is inhibited by and MTH-trp (methylthiohydantoin-DL-tryptophan), modestly inhibited by L-1MT (1-methyl-L-tryptophan) but not D-1MT (1-methyl-D-tryptophan). In terms of biological role, catalyzes the first and rate limiting step of the catabolism of the essential amino acid tryptophan along the kynurenine pathway. Involved in the peripheral immune tolerance, contributing to maintain homeostasis by preventing autoimmunity or immunopathology that would result from uncontrolled and overreacting immune responses. Tryptophan shortage inhibits T lymphocytes division and accumulation of tryptophan catabolites induces T-cell apoptosis and differentiation of regulatory T-cells. Acts as a suppressor of anti-tumor immunity. Limits the growth of intracellular pathogens by depriving tryptophan. Protects the fetus from maternal immune rejection. The chain is Indoleamine 2,3-dioxygenase 1 from Rattus norvegicus (Rat).